The chain runs to 234 residues: BTB/POZ domain-containing protein KCTD5 (234 aa).

N-acetylalanine is present on Ala-2. Residues 44–146 (KWVRLNVGGT…LVKDKIRERD (103 aa)) form the BTB domain. The segment at 213-234 (PYGTTSEPSEKAKILQERGSRM) is disordered. A compositionally biased stretch (basic and acidic residues) spans 220–234 (PSEKAKILQERGSRM).

Homopentamer. Interacts (via C-terminus) with GRASP55/GORASP2. Interacts with CUL3 and with ubiquitinated proteins. Interacts with CRY1.

It localises to the cytoplasm. It is found in the cytosol. Its subcellular location is the nucleus. Functionally, its interaction with CUL3 suggests that it may act as a substrate adapter in some E3 ligase complex. Does not affect the function of Kv channel Kv2.1/KCNB1, Kv1.2/KCNA2, Kv4.2/KCND2 and Kv3.4/KCNC4. The polypeptide is BTB/POZ domain-containing protein KCTD5 (Kctd5) (Mus musculus (Mouse)).